The chain runs to 158 residues: 2-C-methyl-D-erythritol 2,4-cyclodiphosphate synthase (158 aa).

2 residues coordinate a divalent metal cation: Asp-9 and His-11. 4-CDP-2-C-methyl-D-erythritol 2-phosphate is bound by residues 9 to 11 and 35 to 36; these read DVH and HS. His-43 is a binding site for a divalent metal cation. 4-CDP-2-C-methyl-D-erythritol 2-phosphate-binding positions include 57–59, 62–66, 101–107, 133–136, Phe-140, and Arg-143; these read DIG, FPDTD, AQAPKMA, and TTTE.

This sequence belongs to the IspF family. Homotrimer. Requires a divalent metal cation as cofactor.

It carries out the reaction 4-CDP-2-C-methyl-D-erythritol 2-phosphate = 2-C-methyl-D-erythritol 2,4-cyclic diphosphate + CMP. Its pathway is isoprenoid biosynthesis; isopentenyl diphosphate biosynthesis via DXP pathway; isopentenyl diphosphate from 1-deoxy-D-xylulose 5-phosphate: step 4/6. Functionally, involved in the biosynthesis of isopentenyl diphosphate (IPP) and dimethylallyl diphosphate (DMAPP), two major building blocks of isoprenoid compounds. Catalyzes the conversion of 4-diphosphocytidyl-2-C-methyl-D-erythritol 2-phosphate (CDP-ME2P) to 2-C-methyl-D-erythritol 2,4-cyclodiphosphate (ME-CPP) with a corresponding release of cytidine 5-monophosphate (CMP). The sequence is that of 2-C-methyl-D-erythritol 2,4-cyclodiphosphate synthase from Vibrio vulnificus (strain YJ016).